The following is a 408-amino-acid chain: Multidrug resistance protein MdtG (408 aa).

The next 11 helical transmembrane spans lie at 16-36, 58-78, 92-112, 115-135, 146-166, 173-193, 224-244, 256-276, 290-310, 319-339, and 378-398; these read LIVA…VMPF, IVFS…GGLA, LGMG…QFLI, ALLG…ATQV, TLST…GLLA, PVFF…LFCI, LFVT…ILTL, VAFI…LSAP, ILIT…YVQT, FLLG…LVYN, and AVFL…WNSL.

It belongs to the major facilitator superfamily. DHA1 family. MdtG (TC 2.A.1.2.20) subfamily.

The protein resides in the cell inner membrane. Confers resistance to fosfomycin and deoxycholate. The sequence is that of Multidrug resistance protein MdtG from Escherichia coli O139:H28 (strain E24377A / ETEC).